A 187-amino-acid polypeptide reads, in one-letter code: MENNNGNNQLPPKGNEQLKSFWSKEMEGNLDFKNHDLPITRIKKIMKYDPDVTMIASEAPILLSKACEMFIMDLTMRSWLHAQESKRVTLQKSNVDAAVAQTVIFDFLLDDDIEVKRESVAAAADPVAMPPIDDGELPPGMVIGTPVCCSLGIHQPQPQMQAWPGAWTSVSGEEEEARGKKGGDDGN.

The segment at 163–187 is disordered; that stretch reads WPGAWTSVSGEEEEARGKKGGDDGN. Over residues 177–187 the composition is skewed to basic and acidic residues; the sequence is ARGKKGGDDGN.

This sequence belongs to the NFYC/HAP5 subunit family. Heterotrimeric transcription factor composed of three components, NF-YA, NF-YB and NF-YC. NF-YB and NF-YC must interact and dimerize for NF-YA association and DNA binding. In terms of tissue distribution, expressed in flowers and siliques.

The protein localises to the nucleus. In terms of biological role, stimulates the transcription of various genes by recognizing and binding to a CCAAT motif in promoters. The sequence is that of Nuclear transcription factor Y subunit C-8 (NFYC8) from Arabidopsis thaliana (Mouse-ear cress).